The chain runs to 67 residues: ATP synthase F(0) complex subunit 8 (67 aa).

The helical transmembrane segment at 8–24 (TWFTVILSMIISLFMLL) threads the bilayer. Lys-54 carries the post-translational modification N6-acetyllysine; alternate. Lys-54 is subject to N6-succinyllysine; alternate. Residue Lys-57 is modified to N6-acetyllysine.

The protein belongs to the ATPase protein 8 family. In terms of assembly, component of the ATP synthase complex composed at least of ATP5F1A/subunit alpha, ATP5F1B/subunit beta, ATP5MC1/subunit c (homooctomer), MT-ATP6/subunit a, MT-ATP8/subunit 8, ATP5ME/subunit e, ATP5MF/subunit f, ATP5MG/subunit g, ATP5MK/subunit k, ATP5MJ/subunit j, ATP5F1C/subunit gamma, ATP5F1D/subunit delta, ATP5F1E/subunit epsilon, ATP5PF/subunit F6, ATP5PB/subunit b, ATP5PD/subunit d, ATP5PO/subunit OSCP. ATP synthase complex consists of a soluble F(1) head domain (subunits alpha(3) and beta(3)) - the catalytic core - and a membrane F(0) domain - the membrane proton channel (subunits c, a, 8, e, f, g, k and j). These two domains are linked by a central stalk (subunits gamma, delta, and epsilon) rotating inside the F1 region and a stationary peripheral stalk (subunits F6, b, d, and OSCP). Interacts with PRICKLE3.

Its subcellular location is the mitochondrion membrane. Functionally, subunit 8, of the mitochondrial membrane ATP synthase complex (F(1)F(0) ATP synthase or Complex V) that produces ATP from ADP in the presence of a proton gradient across the membrane which is generated by electron transport complexes of the respiratory chain. ATP synthase complex consist of a soluble F(1) head domain - the catalytic core - and a membrane F(1) domain - the membrane proton channel. These two domains are linked by a central stalk rotating inside the F(1) region and a stationary peripheral stalk. During catalysis, ATP synthesis in the catalytic domain of F(1) is coupled via a rotary mechanism of the central stalk subunits to proton translocation. In vivo, can only synthesize ATP although its ATP hydrolase activity can be activated artificially in vitro. Part of the complex F(0) domain. The sequence is that of ATP synthase F(0) complex subunit 8 from Cavia porcellus (Guinea pig).